The primary structure comprises 209 residues: Superoxide dismutase [Mn/Fe] (209 aa).

Residues histidine 38, histidine 90, aspartate 172, and histidine 176 each contribute to the Fe(3+) site. Mn(2+) contacts are provided by histidine 38, histidine 90, aspartate 172, and histidine 176.

This sequence belongs to the iron/manganese superoxide dismutase family. Mn(2+) is required as a cofactor. Requires Fe(3+) as cofactor.

The enzyme catalyses 2 superoxide + 2 H(+) = H2O2 + O2. In terms of biological role, destroys superoxide anion radicals which are normally produced within the cells and which are toxic to biological systems. Catalyzes the dismutation of superoxide anion radicals into O2 and H2O2 by successive reduction and oxidation of the transition metal ion at the active site. The protein is Superoxide dismutase [Mn/Fe] (sodB) of Rickettsia prowazekii (strain Madrid E).